Consider the following 988-residue polypeptide: Putative disease resistance protein RGA4 (988 aa).

The NB-ARC domain maps to 137–439; sequence AAAATRETGF…MAHGFLLSKG (303 aa). ATP is bound at residue 184-191; that stretch reads GMGGLGKT. LRR repeat units lie at residues 526-548, 549-572, 574-595, 596-620, 638-662, 674-696, 751-776, 784-808, 829-851, 852-876, 878-900, 901-925, 927-950, and 966-988; these read FVSL…SIGD, LLHL…LCKL, NLQT…QTSK, LSSL…GLLT, LGEL…KNDT, LQSL…EVKV, LPCL…DVHS, FPSL…EGEE, LSSV…SISN, LSTL…MFTS, TNLE…SLTS, LNAL…GLEG, TSLT…LQHL, and KRCD…LDIH.

This sequence belongs to the disease resistance NB-LRR family.

Disease resistance protein. Resistance proteins guard the plant against pathogens that contain an appropriate avirulence protein via a direct or indirect interaction with this avirulence protein. That triggers a defense system which restricts the pathogen growth. The sequence is that of Putative disease resistance protein RGA4 (RGA4) from Solanum bulbocastanum (Wild potato).